Here is a 421-residue protein sequence, read N- to C-terminus: 3-isopropylmalate dehydratase large subunit (421 aa).

[4Fe-4S] cluster contacts are provided by Cys302, Cys362, and Cys365.

It belongs to the aconitase/IPM isomerase family. LeuC type 2 subfamily. In terms of assembly, heterodimer of LeuC and LeuD. The cofactor is [4Fe-4S] cluster.

The catalysed reaction is (2R,3S)-3-isopropylmalate = (2S)-2-isopropylmalate. Its pathway is amino-acid biosynthesis; L-leucine biosynthesis; L-leucine from 3-methyl-2-oxobutanoate: step 2/4. Catalyzes the isomerization between 2-isopropylmalate and 3-isopropylmalate, via the formation of 2-isopropylmaleate. The chain is 3-isopropylmalate dehydratase large subunit from Campylobacter fetus subsp. fetus (strain 82-40).